Here is a 282-residue protein sequence, read N- to C-terminus: Undecaprenyl-diphosphatase (282 aa).

Transmembrane regions (helical) follow at residues 40–60 (GAAFTAIVQIGTLAAVLIYFM), 89–109 (WMIAAGTIPIVVFGLAFKDDI), 113–133 (LRSLYWVSAALIALALVLSIA), 150–170 (ISEITWLDAMIIGFAQAMALI), 196–216 (FSFLLSLPSVFAAGIYQLYKT), 230–250 (IAVATVFAFIFGYLSIAFLLT), and 258–278 (GIFIGYRLLLGISLIIMIGTG).

It belongs to the UppP family.

The protein resides in the cell inner membrane. It catalyses the reaction di-trans,octa-cis-undecaprenyl diphosphate + H2O = di-trans,octa-cis-undecaprenyl phosphate + phosphate + H(+). Catalyzes the dephosphorylation of undecaprenyl diphosphate (UPP). Confers resistance to bacitracin. In Chlorobaculum parvum (strain DSM 263 / NCIMB 8327) (Chlorobium vibrioforme subsp. thiosulfatophilum), this protein is Undecaprenyl-diphosphatase.